A 563-amino-acid chain; its full sequence is MASSVLNLFKSCRPFTPIRFSSLPKSQFRIQFPLRPGKETQLRRCFTTLSSLTDGGAPISGGKELWLHNTMSRKKELFKPKVEGKVGMYVCGVTAYDLSHIGHARVYVTFDVLLRYLKHLGYEVSYVRNFTDVDDKIIARAKELEEDPISLSRRFCEEFNRDMEQLQCLDPSVQPRVSDHIPQIIDLIKQILDNGYAYKVDGDIYFSVDKFPTYGKLSGRKLEDNRAGERVAVDTRKKHPADFALWKAAKEGEPFWESPWGRGRPGWHIECSAMSAAYLGYSFDIHGGGMDLVFPHHENEIAQSCAACDSSNISYWIHNGFVTVDSEKMSKSLGNFFTIRQVIDLYHPLALRLFLMGTHYRSPINYSDFLLESASERIFYIYQTLHDCESALGEKDSTFENGSVPSDTLTSINTFRTEFVASMSDDLLTPVTLAAMSEPLKTINDLIHTRKGKKQARREESLKALETTIRDVLTILGLMPTSYSEVLEQLKEKALKRAGLKEEDVLQRVQERTDARKNKEYERSDAIRKDLAKVGIALMDSPEGTTWRPAIPLALQEPVTTTP.

A Zn(2+)-binding site is contributed by Cys-91. Gly-92 is an L-cysteine binding site. Positions 93–103 match the 'HIGH' region motif; sequence VTAYDLSHIGH. Residue Thr-131 participates in L-cysteine binding. The short motif at 136 to 139 is the 'KIIK' region element; the sequence is KIIA. Zn(2+) is bound by residues Cys-271, His-296, and Glu-300. His-296 provides a ligand contact to L-cysteine. The short motif at 328 to 332 is the 'KMSKS' region element; the sequence is KMSKS. Residue Lys-331 participates in ATP binding.

This sequence belongs to the class-I aminoacyl-tRNA synthetase family. Requires Zn(2+) as cofactor.

The protein localises to the plastid. It localises to the chloroplast. It is found in the mitochondrion. It carries out the reaction tRNA(Cys) + L-cysteine + ATP = L-cysteinyl-tRNA(Cys) + AMP + diphosphate. Required for female gametophyte development. Is necessary for the fusion of central cell nuclei and programmed cell death (PCD) of the antipodals. The protein is Cysteine--tRNA ligase, chloroplastic/mitochondrial of Arabidopsis thaliana (Mouse-ear cress).